Here is a 128-residue protein sequence, read N- to C-terminus: Large ribosomal subunit protein bL19 (128 aa).

It belongs to the bacterial ribosomal protein bL19 family.

In terms of biological role, this protein is located at the 30S-50S ribosomal subunit interface and may play a role in the structure and function of the aminoacyl-tRNA binding site. The chain is Large ribosomal subunit protein bL19 from Janthinobacterium sp. (strain Marseille) (Minibacterium massiliensis).